The sequence spans 121 residues: Large ribosomal subunit protein bL12 (121 aa).

It belongs to the bacterial ribosomal protein bL12 family. Homodimer. Part of the ribosomal stalk of the 50S ribosomal subunit. Forms a multimeric L10(L12)X complex, where L10 forms an elongated spine to which 2 to 4 L12 dimers bind in a sequential fashion. Binds GTP-bound translation factors.

Functionally, forms part of the ribosomal stalk which helps the ribosome interact with GTP-bound translation factors. Is thus essential for accurate translation. This is Large ribosomal subunit protein bL12 from Pelagibacter ubique (strain HTCC1062).